The primary structure comprises 157 residues: 3-hydroxyacyl-[acyl-carrier-protein] dehydratase FabZ (157 aa).

Residue His-58 is part of the active site.

It belongs to the thioester dehydratase family. FabZ subfamily.

It is found in the cytoplasm. It carries out the reaction a (3R)-hydroxyacyl-[ACP] = a (2E)-enoyl-[ACP] + H2O. In terms of biological role, involved in unsaturated fatty acids biosynthesis. Catalyzes the dehydration of short chain beta-hydroxyacyl-ACPs and long chain saturated and unsaturated beta-hydroxyacyl-ACPs. The polypeptide is 3-hydroxyacyl-[acyl-carrier-protein] dehydratase FabZ (Brucella ovis (strain ATCC 25840 / 63/290 / NCTC 10512)).